The sequence spans 206 residues: Ras-related protein Ral-A (206 aa).

GTP-binding positions include 24–29 (GVGKSA), 40–46 (VEDYEPT), and 127–130 (NKSD). Residues 43 to 51 (YEPTKADSY) carry the Effector region motif. (Microbial infection) O-linked (Glc) threonine; by P.sordellii toxin TcsL glycosylation occurs at Thr-46. Phosphoserine; by AURKA is present on Ser-194. Cys-203 carries the post-translational modification Cysteine methyl ester. Cys-203 carries the S-geranylgeranyl cysteine lipid modification. The propeptide at 204–206 (CIL) is removed in mature form.

The protein belongs to the small GTPase superfamily. Ras family. Interacts (via effector domain) with RALBP1; during mitosis, recruits RALBP1 to the mitochondrion where it promotes DNM1L phosphorylation and mitochondrial fission. Interacts with EXOC2/Sec5 and EXOC8/Exo84; binding to EXOC2 and EXOC8 is mutually exclusive. Interacts with Clostridium exoenzyme C3. Interacts with RALGPS1. Interacts with LPAR1 and LPAR2. Interacts with GRK2 in response to LPAR1 activation. RALA and GRK2 binding to LPAR1 is mutually exclusive. Interacts with CDC42. Phosphorylated. Phosphorylation at Ser-194 by AURKA/Aurora kinase A, during mitosis, induces RALA localization to the mitochondrion where it regulates mitochondrial fission. In terms of processing, prenylation is essential for membrane localization. The geranylgeranylated form and the farnesylated mutant do not undergo alternative prenylation in response to geranylgeranyltransferase I inhibitors (GGTIs) and farnesyltransferase I inhibitors (FTIs). Post-translationally, (Microbial infection) Glucosylated at Thr-46 by P.sordellii toxin TcsL from strain 6018. Monoglucosylation completely prevents the recognition of the downstream effector, blocking the GTPases in their inactive form. Not glucosylated by TcsL from strain VPI 9048.

The protein resides in the cell membrane. The protein localises to the cleavage furrow. It localises to the midbody. Its subcellular location is the midbody ring. It is found in the mitochondrion. The catalysed reaction is GTP + H2O = GDP + phosphate + H(+). Its activity is regulated as follows. Alternates between an inactive form bound to GDP and an active form bound to GTP. Activated by a guanine nucleotide-exchange factor (GEF) and inactivated by a GTPase-activating protein (GAP). Its function is as follows. Multifunctional GTPase involved in a variety of cellular processes including gene expression, cell migration, cell proliferation, oncogenic transformation and membrane trafficking. Accomplishes its multiple functions by interacting with distinct downstream effectors. Acts as a GTP sensor for GTP-dependent exocytosis of dense core vesicles. The RALA-exocyst complex regulates integrin-dependent membrane raft exocytosis and growth signaling. Key regulator of LPAR1 signaling and competes with GRK2 for binding to LPAR1 thus affecting the signaling properties of the receptor. Required for anchorage-independent proliferation of transformed cells. During mitosis, supports the stabilization and elongation of the intracellular bridge between dividing cells. Cooperates with EXOC2 to recruit other components of the exocyst to the early midbody. During mitosis, also controls mitochondrial fission by recruiting to the mitochondrion RALBP1, which mediates the phosphorylation and activation of DNM1L by the mitotic kinase cyclin B-CDK1. The protein is Ras-related protein Ral-A (RALA) of Homo sapiens (Human).